The primary structure comprises 662 residues: Biosynthetic arginine decarboxylase (662 aa).

The residue at position 126 (Lys126) is an N6-(pyridoxal phosphate)lysine. Leu308–Tyr318 contributes to the substrate binding site.

It belongs to the Orn/Lys/Arg decarboxylase class-II family. SpeA subfamily. Mg(2+) is required as a cofactor. Requires pyridoxal 5'-phosphate as cofactor.

It carries out the reaction L-arginine + H(+) = agmatine + CO2. Functionally, catalyzes the biosynthesis of agmatine from arginine. The polypeptide is Biosynthetic arginine decarboxylase (Deinococcus radiodurans (strain ATCC 13939 / DSM 20539 / JCM 16871 / CCUG 27074 / LMG 4051 / NBRC 15346 / NCIMB 9279 / VKM B-1422 / R1)).